A 178-amino-acid chain; its full sequence is Peptide methionine sulfoxide reductase MsrA (178 aa).

The active site involves cysteine 12.

This sequence belongs to the MsrA Met sulfoxide reductase family.

It carries out the reaction L-methionyl-[protein] + [thioredoxin]-disulfide + H2O = L-methionyl-(S)-S-oxide-[protein] + [thioredoxin]-dithiol. It catalyses the reaction [thioredoxin]-disulfide + L-methionine + H2O = L-methionine (S)-S-oxide + [thioredoxin]-dithiol. Functionally, has an important function as a repair enzyme for proteins that have been inactivated by oxidation. Catalyzes the reversible oxidation-reduction of methionine sulfoxide in proteins to methionine. The polypeptide is Peptide methionine sulfoxide reductase MsrA (Erwinia tasmaniensis (strain DSM 17950 / CFBP 7177 / CIP 109463 / NCPPB 4357 / Et1/99)).